We begin with the raw amino-acid sequence, 312 residues long: Ribosomal protein uL3 glutamine methyltransferase (312 aa).

The protein belongs to the protein N5-glutamine methyltransferase family. PrmB subfamily.

It carries out the reaction L-glutaminyl-[ribosomal protein uL3] + S-adenosyl-L-methionine = N(5)-methyl-L-glutaminyl-[ribosomal protein uL3] + S-adenosyl-L-homocysteine + H(+). Functionally, methylates large ribosomal subunit protein uL3 on a specific glutamine residue. The protein is Ribosomal protein uL3 glutamine methyltransferase of Xylella fastidiosa (strain 9a5c).